The primary structure comprises 328 residues: Tetraacyldisaccharide 4'-kinase (328 aa).

55-62 contributes to the ATP binding site; sequence TAGGNGKT.

Belongs to the LpxK family.

The catalysed reaction is a lipid A disaccharide + ATP = a lipid IVA + ADP + H(+). It participates in glycolipid biosynthesis; lipid IV(A) biosynthesis; lipid IV(A) from (3R)-3-hydroxytetradecanoyl-[acyl-carrier-protein] and UDP-N-acetyl-alpha-D-glucosamine: step 6/6. Transfers the gamma-phosphate of ATP to the 4'-position of a tetraacyldisaccharide 1-phosphate intermediate (termed DS-1-P) to form tetraacyldisaccharide 1,4'-bis-phosphate (lipid IVA). This is Tetraacyldisaccharide 4'-kinase from Shigella boydii serotype 4 (strain Sb227).